Here is a 170-residue protein sequence, read N- to C-terminus: Large ribosomal subunit protein uL10 (170 aa).

The protein belongs to the universal ribosomal protein uL10 family. In terms of assembly, part of the ribosomal stalk of the 50S ribosomal subunit. The N-terminus interacts with L11 and the large rRNA to form the base of the stalk. The C-terminus forms an elongated spine to which L12 dimers bind in a sequential fashion forming a multimeric L10(L12)X complex.

Forms part of the ribosomal stalk, playing a central role in the interaction of the ribosome with GTP-bound translation factors. The protein is Large ribosomal subunit protein uL10 of Nitratiruptor sp. (strain SB155-2).